The sequence spans 286 residues: Ribosome maturation factor RimP (286 aa).

Over residues 200-224 (LDGEDGDDTGVDAGDPDQDDADDAL) the composition is skewed to acidic residues. The tract at residues 200-286 (LDGEDGDDTG…ANASTVKETH (87 aa)) is disordered. Residues 248 to 267 (VGRKAKGKKASPKKSNAKKK) show a composition bias toward basic residues. Positions 273-286 (AASSANASTVKETH) are enriched in polar residues.

This sequence belongs to the RimP family.

The protein localises to the cytoplasm. In terms of biological role, required for maturation of 30S ribosomal subunits. This chain is Ribosome maturation factor RimP, found in Xanthobacter autotrophicus (strain ATCC BAA-1158 / Py2).